The primary structure comprises 121 residues: Flagellar protein FliT (121 aa).

The interval 1 to 50 is required for homodimerization; that stretch reads MNHAPHLYFAWQQLVEKSQLMLRLATEEQWDELIASEMAYVNAVQEIAHL. Positions 60-98 are fliD binding; sequence MQEQLRPMLRLILDNESKVKQLLQIRMDELAKLVGQSSV.

The protein belongs to the FliT family. Homodimer. Interacts with FliD and FlhC.

It localises to the cytoplasm. The protein resides in the cytosol. Its function is as follows. Dual-function protein that regulates the transcription of class 2 flagellar operons and that also acts as an export chaperone for the filament-capping protein FliD. As a transcriptional regulator, acts as an anti-FlhDC factor; it directly binds FlhC, thus inhibiting the binding of the FlhC/FlhD complex to class 2 promoters, resulting in decreased expression of class 2 flagellar operons. As a chaperone, effects FliD transition to the membrane by preventing its premature polymerization, and by directing it to the export apparatus. The sequence is that of Flagellar protein FliT from Escherichia coli O139:H28 (strain E24377A / ETEC).